A 171-amino-acid polypeptide reads, in one-letter code: NADH-quinone oxidoreductase subunit I 1 (171 aa).

4Fe-4S ferredoxin-type domains follow at residues Leu41–Thr71 and Glu81–Asp110. Cys51, Cys54, Cys57, Cys61, Cys90, Cys93, Cys96, and Cys100 together coordinate [4Fe-4S] cluster.

This sequence belongs to the complex I 23 kDa subunit family. In terms of assembly, NDH-1 is composed of 14 different subunits. Subunits NuoA, H, J, K, L, M, N constitute the membrane sector of the complex. It depends on [4Fe-4S] cluster as a cofactor.

It is found in the cell inner membrane. The catalysed reaction is a quinone + NADH + 5 H(+)(in) = a quinol + NAD(+) + 4 H(+)(out). In terms of biological role, NDH-1 shuttles electrons from NADH, via FMN and iron-sulfur (Fe-S) centers, to quinones in the respiratory chain. The immediate electron acceptor for the enzyme in this species is believed to be ubiquinone. Couples the redox reaction to proton translocation (for every two electrons transferred, four hydrogen ions are translocated across the cytoplasmic membrane), and thus conserves the redox energy in a proton gradient. This Nitrosospira multiformis (strain ATCC 25196 / NCIMB 11849 / C 71) protein is NADH-quinone oxidoreductase subunit I 1.